Here is a 159-residue protein sequence, read N- to C-terminus: Ribosomal RNA large subunit methyltransferase H (159 aa).

G108 contributes to the S-adenosyl-L-methionine binding site.

Belongs to the RNA methyltransferase RlmH family. As to quaternary structure, homodimer.

It localises to the cytoplasm. The catalysed reaction is pseudouridine(1915) in 23S rRNA + S-adenosyl-L-methionine = N(3)-methylpseudouridine(1915) in 23S rRNA + S-adenosyl-L-homocysteine + H(+). In terms of biological role, specifically methylates the pseudouridine at position 1915 (m3Psi1915) in 23S rRNA. The protein is Ribosomal RNA large subunit methyltransferase H of Lactobacillus johnsonii (strain CNCM I-12250 / La1 / NCC 533).